The chain runs to 483 residues: Spermatogenesis-defective protein 39 homolog (483 aa).

It belongs to the SPE39 family. Interacts with vps33b. High levels detected in liver and small intestine of larvae at 5 days post-fertilization.

It is found in the cytoplasm. The protein resides in the cytoplasmic vesicle. It localises to the early endosome. Its subcellular location is the recycling endosome. The protein localises to the late endosome. Its function is as follows. Proposed to be involved in endosomal maturation implicating in part vps33b. In epithelial cells, the vps33b:vipas39 complex may play a role in the apical rab11a-dependent recycling pathway and in the maintenance of the apical-basolateral polarity. May play a role in lysosomal trafficking, probably via association with the core HOPS complex in a discrete population of endosomes; the functions seems to be independent of vps33b. May play a role in vesicular trafficking during spermatogenesis. May be involved in direct or indirect transcriptional regulation of E-cadherin. The chain is Spermatogenesis-defective protein 39 homolog (vipas39) from Danio rerio (Zebrafish).